The primary structure comprises 444 residues: MRNVRLFRALLGVDKRTVIEDIEFEEDDAGDGARVIARVRPRSAVLRRCGRCGRKASWYDRGAGLRQWRSLDWGTVEVFLEAEAPRVNCPTHGPTVVAVPWARHHAGHTYAFDDTVAWLAVACSKTAVCELMRIAWRTVGAIVARVWADTEKRIDRFANLRRIGIDEISYKRHHRYLTVVVDHDSGRLVWAAPGHDKATLGLFFDALGAERAAQITHVSADAADWIADVVTERCPDAIQCADPFHVVAWATEALDVERRRAWNDARAIARTEPKWGRGRPGKNAAPRPGRERARRLKGARYALWKNPEDLTERQSAKLAWIAKTDPRLYRAYLLKESLRHVFSVKGEEGKQALDRWISWAQRCRIPVFVELAARIKRHRVAIDAALDHGLSQGLIESTNTKIRLLTRIAFGFRSPQALIALAMLTLAGHRPTLPGRHNHPQISQ.

Positions 273 to 292 (PKWGRGRPGKNAAPRPGRER) are disordered.

This sequence belongs to the transposase 12 family.

The chain is Transposase for insertion sequence element IS1557 from Mycobacterium tuberculosis (strain CDC 1551 / Oshkosh).